The chain runs to 122 residues: Large ribosomal subunit protein uL14 (122 aa).

It belongs to the universal ribosomal protein uL14 family. Part of the 50S ribosomal subunit. Forms a cluster with proteins L3 and L19. In the 70S ribosome, L14 and L19 interact and together make contacts with the 16S rRNA in bridges B5 and B8.

Binds to 23S rRNA. Forms part of two intersubunit bridges in the 70S ribosome. The protein is Large ribosomal subunit protein uL14 of Shewanella loihica (strain ATCC BAA-1088 / PV-4).